We begin with the raw amino-acid sequence, 211 residues long: Protein-L-isoaspartate O-methyltransferase (211 aa).

Residue serine 60 is part of the active site.

Belongs to the methyltransferase superfamily. L-isoaspartyl/D-aspartyl protein methyltransferase family.

It localises to the cytoplasm. The enzyme catalyses [protein]-L-isoaspartate + S-adenosyl-L-methionine = [protein]-L-isoaspartate alpha-methyl ester + S-adenosyl-L-homocysteine. Functionally, catalyzes the methyl esterification of L-isoaspartyl residues in peptides and proteins that result from spontaneous decomposition of normal L-aspartyl and L-asparaginyl residues. It plays a role in the repair and/or degradation of damaged proteins. This Pseudomonas savastanoi pv. phaseolicola (strain 1448A / Race 6) (Pseudomonas syringae pv. phaseolicola (strain 1448A / Race 6)) protein is Protein-L-isoaspartate O-methyltransferase.